The chain runs to 62 residues: uncharacterized protein (62 aa).

This is an uncharacterized protein from Methanocaldococcus jannaschii (strain ATCC 43067 / DSM 2661 / JAL-1 / JCM 10045 / NBRC 100440) (Methanococcus jannaschii).